The following is a 1331-amino-acid chain: ABC multidrug transporter MDR2 (1331 aa).

A disordered region spans residues 1–50; it reads MVEPSEKPNTQNDDVSKQEIRNPVSSSSSTSDKEKVAKKGNSDATKSLTP. Over residues 31 to 41 the composition is skewed to basic and acidic residues; sequence SDKEKVAKKGN. The next 4 helical transmembrane spans lie at 93–113, 147–167, 219–239, and 242–262; these read MILL…LPLF, YFVY…VGFI, KVGL…IGYV, and WKLA…MGGI. Positions 97-387 constitute an ABC transmembrane type-1 1 domain; it reads AIVSLASIAA…VAPNTQAFAS (291 aa). Asn293 carries N-linked (GlcNAc...) asparagine glycosylation. 2 helical membrane passes run 325–345 and 358–378; these read LGIM…LGFW and LSAI…IGNV. Residues 422–667 form the ABC transporter 1 domain; that stretch reads IEFRGIKHIY…KGTYLQLVEA (246 aa). 457–464 is an ATP binding site; sequence GPSGSGKS. The N-linked (GlcNAc...) asparagine glycan is linked to Asn529. 2 helical membrane-spanning segments follow: residues 762 to 782 and 808 to 828; these read LCGF…SVFF and LMFL…GVIF. An ABC transmembrane type-1 2 domain is found at 764–1051; the sequence is GFFFAVLSGA…VFSFSPDMGK (288 aa). A glycan (N-linked (GlcNAc...) asparagine) is linked at Asn860. 4 helical membrane passes run 884-904, 910-930, 995-1015, and 1025-1045; these read LGTI…ALAF, LVCI…FWIL, ASQS…GGLL, and FFLC…VFSF. Positions 1086–1324 constitute an ABC transporter 2 domain; sequence IEFRDVHFRY…KGRYYELVHM (239 aa). N-linked (GlcNAc...) asparagine glycosylation is present at Asn1108. An ATP-binding site is contributed by 1121-1128; sequence GPSGCGKS.

This sequence belongs to the ABC transporter superfamily. ABCB family. Multidrug resistance exporter (TC 3.A.1.201) subfamily.

The protein resides in the cell membrane. The catalysed reaction is itraconazole(in) + ATP + H2O = itraconazole(out) + ADP + phosphate + H(+). Its function is as follows. ABC-type efflux transporter involved in the modulation susceptibility to itraconazole. The protein is ABC multidrug transporter MDR2 of Trichophyton rubrum (strain ATCC MYA-4607 / CBS 118892) (Athlete's foot fungus).